A 480-amino-acid polypeptide reads, in one-letter code: NADH-quinone oxidoreductase subunit N (480 aa).

14 helical membrane-spanning segments follow: residues 11 to 31 (LLPELVATGFLLVVLLGGVFA), 38 to 58 (LVAALAGLGTLASFAAAAGLL), 76 to 96 (FALYFKLIITATAFFTVIAAA), 105 to 125 (APEYMTLIIAVALGGMLLVSM), 128 to 148 (LFGVFLAVELATIPSYAMVAF), 163 to 183 (LITGVIASSFLLYGIVLIYGV), 195 to 215 (AFGEGLSPVAIVGLVLMISGL), 240 to 260 (AAFLSVAPKAAIFAALLRILL), 270 to 290 (WTALMAVIAIVTMFVGNLLAL), 298 to 318 (MLAYSSVAHSGYILAAFAALQ), 329 to 349 (VMIYSAAYAVMNLGAFLTIDL), 368 to 388 (AAAMAVFMAALVGIPPLSGFF), 407 to 427 (VAVAALVVNSVLSVPYYFGII), and 453 to 473 (VYAMALLTALFFLGVGPLAAL).

The protein belongs to the complex I subunit 2 family. In terms of assembly, NDH-1 is composed of 14 different subunits. Subunits NuoA, H, J, K, L, M, N constitute the membrane sector of the complex.

It is found in the cell membrane. The catalysed reaction is a quinone + NADH + 5 H(+)(in) = a quinol + NAD(+) + 4 H(+)(out). NDH-1 shuttles electrons from NADH, via FMN and iron-sulfur (Fe-S) centers, to quinones in the respiratory chain. The immediate electron acceptor for the enzyme in this species is believed to be a menaquinone. Couples the redox reaction to proton translocation (for every two electrons transferred, four hydrogen ions are translocated across the cytoplasmic membrane), and thus conserves the redox energy in a proton gradient. The polypeptide is NADH-quinone oxidoreductase subunit N (Rubrobacter xylanophilus (strain DSM 9941 / JCM 11954 / NBRC 16129 / PRD-1)).